A 526-amino-acid chain; its full sequence is MDIYAVAVGRVGVELDAAQLERVRATHLRVQGWGMEKYPMYGVNTGFGELINVIIPPQFKSDLQHNLLRSHAAGGGEPFPDEVVRAIMTVRINCLMKGYSGISPEALQLLATMLNRGIHPVIPMQGSLGASGDLAPLSHMALPLIGDGHVRKNGVTRPTMEVFQEEGLTPLKLGFKEGLALVNGTSAMTGAASLALYRARHLLRLSLLASADIVQAMNASTRPFSHTGNAVKNHPGQVVIARLMRDLTEGTGLMRDHQDIMRAISERTSHSNDVEETEIYLQNAYSLRCMPQVLGVVLETLQMCQRFIEEEANSVNDNPVILDTPAETYHGANFHGQYVAMACDYLSIAVAEMGVLAERQLNRLLDPHINKPLPGFLAHAKTGLFCGFEGGQYLATSIASENLDLAAPSSIKSIPSNGQNQDIVSMGLIAARKTLALCENVGTILSVLMAALNQASHFTEAAKYSAPIRSIHEKLGKVAPRYEDERPMSTVIAQVRGVLLQEQGLALAQSLVNLDLTPDLSLEPRA.

Y41 serves as the catalytic Proton donor/acceptor. H71 lines the substrate pocket. Positions 130–132 (ASG) form a cross-link, 5-imidazolinone (Ala-Gly). S131 carries the 2,3-didehydroalanine (Ser) modification. The substrate site is built by N183 and R288.

Belongs to the TAL/TAM family. As to quaternary structure, homotetramer; dimer of dimers. Contains an active site 4-methylidene-imidazol-5-one (MIO), which is formed autocatalytically by cyclization and dehydration of residues Ala-Ser-Gly.

It catalyses the reaction L-tyrosine = 3-amino-3-(4-hydroxyphenyl)propanoate. The catalysed reaction is L-tyrosine = (E)-4-coumarate + NH4(+). In terms of biological role, has aminomutase and, to a much lesser extent, ammonia-lyase activity. Primarily, catalyzes the rearrangement of L-tyrosine to S-beta-tyrosine, which is probably incorporated into secondary metabolite myxovalargin. The aminomutase activity exclusively produces S-beta-tyrosine. This is Tyrosine 2,3-aminomutase from Myxococcus sp. (strain Mx-B0).